Consider the following 466-residue polypeptide: Phage-like element PBSX protein XkdK (466 aa).

This sequence belongs to the myoviridae tail sheath protein family.

This is Phage-like element PBSX protein XkdK (xkdK) from Bacillus subtilis (strain 168).